A 303-amino-acid polypeptide reads, in one-letter code: MARKRKGRDISGWLVVDKPAGMTSTAVVNKVRWALGANKAGHAGTLDPEATGVLAIALGEATKTVPYITDALKAYVFTVRLGQATNTDDAEGEVIASSDLRPTDEQIKDALAPFLGDIMQVPPKFSAVKIDGQRAYKLARDGEDVELAARPLWVEELLMLDRPDPDHVLLEMTCGKGGYVRSIARDLGAALGCYGHVRELRRIWSGPFEAEDGITLEQVEALAKTPELDSYLRPLEEGLADLPELKCSPEGAQRLRNGNPGMVYPGEAEYGDEAWASFEGRAVAVGIYKSGELHPARVFARPE.

The Nucleophile role is filled by D47.

It belongs to the pseudouridine synthase TruB family. Type 1 subfamily.

It carries out the reaction uridine(55) in tRNA = pseudouridine(55) in tRNA. Responsible for synthesis of pseudouridine from uracil-55 in the psi GC loop of transfer RNAs. The protein is tRNA pseudouridine synthase B of Ruegeria pomeroyi (strain ATCC 700808 / DSM 15171 / DSS-3) (Silicibacter pomeroyi).